The chain runs to 495 residues: MIAGLVLVVLLTKYLQRVFLHPLSKFPGPSIAAVSHLWEFWHDWVKNGTFLEGVADLHRSYKSPVVRIAPNHLHVNDVEVYHQVFKVNTNFYKAPYFYEAFGFATSIATITNPHRHKPLRTTVAPMFTGTAVDGMSDEMYDMVRKATDLLAARSTGTGNKFNVMQFLRCITTDVSCNLIFGETLDLVSNGYHSDRFLGNLDTFVENVWIMVHAPWIAQFALMLPNSLTDKIVPGYAYFREQCISWIDKVRARRAKGITLMRNGRPTLFDVLMDDNPDKNYKVPSKSELIDQAFLFAIAGTDTTSMATTFAVFHILNNPAVRERLCEELRGASAIIRDQYNYREVRKLPYLSAVIKEALRMSSPFPGRLPRVVPPEGMKLDNKFVPGGTIISISSRCIMDDPKIYPEPEKFLPERWMGENAKSMDRNMIAFGKGSRSCLGTNLAYLKMYTMLSTMFCRWDLRLVSPTDHKLRYLDHALIEMKSQVVVEILADHWTT.

The helical transmembrane segment at 1-21 (MIAGLVLVVLLTKYLQRVFLH) threads the bilayer. Asn-47 is a glycosylation site (N-linked (GlcNAc...) asparagine). Position 437 (Cys-437) interacts with heme.

The protein belongs to the cytochrome P450 family. Requires heme as cofactor.

The protein localises to the membrane. It carries out the reaction dauca-4,7-diene + 3 reduced [NADPH--hemoprotein reductase] + 3 O2 = asperaculane D + 3 oxidized [NADPH--hemoprotein reductase] + 4 H2O + 4 H(+). The protein operates within secondary metabolite biosynthesis. Cytochrome P450 monooxygenase; part of the gene cluster that mediates the biosynthesis of aculenes, a unique type of norsesquiterpenes that contain a nordaucane skeleton linked to an L-proline moiety and are of mixed biosynthetic origin. The pathway begins with the synthesis of dauca-4,7-diene by the terpene cyclase aneC using farnesyl pyrophosphate (FPP) as substrate. The cytochrome P450 monooxygenase aneF then performs the initial oxidation at C-12 of dauca-4,7-diene to yield asperaculane D. Asperaculane D is substrate of the cytochrome P450 monooxygenase aneD for C-10 hydroxylation to yield asperaculane E. The cytochrome P450 monooxygenase aneG then converts asperaculane E into aculene D via C-2 oxidation. The monomodular nonribosomal peptide synthtase aneB adenylates L-proline and the thiohydrolase aneE transfers this activated L-proline derivative to aculenes D and C to produce respectively aculenes B and A. The dioxygenase aneA converts aculene D into aculene C, and aculene B into aculene A by introducing the 5,6-alkene moiety. Asperculanes A, B, C and F, as well as 14-prolyl asperculane C, might be shunt products of the pathway. In Aspergillus aculeatus (strain ATCC 16872 / CBS 172.66 / WB 5094), this protein is Cytochrome P450 monooxygenase aneF.